A 79-amino-acid polypeptide reads, in one-letter code: Small ribosomal subunit protein uS17 (79 aa).

Belongs to the universal ribosomal protein uS17 family. Part of the 30S ribosomal subunit.

Functionally, one of the primary rRNA binding proteins, it binds specifically to the 5'-end of 16S ribosomal RNA. The chain is Small ribosomal subunit protein uS17 from Caulobacter sp. (strain K31).